We begin with the raw amino-acid sequence, 54 residues long: Hemoglobin subunit omega (54 aa).

A Globin domain is found at 2–54; that stretch reads HWTAEEKQIILAIWAKIDIEEAGAAALSRLLVVYPWTQRYFKNFGNLSSPTAI.

Belongs to the globin family.

In terms of biological role, hemoglobin omega chain is an embryonic-type beta-type chain found in prenatal and neonatal marsupials. This is Hemoglobin subunit omega from Notamacropus eugenii (Tammar wallaby).